The sequence spans 323 residues: tRNA U34 carboxymethyltransferase (323 aa).

Residues K91, W105, K110, G130, 181–182, M196, Y200, and R315 each bind carboxy-S-adenosyl-L-methionine; that span reads IE.

The protein belongs to the class I-like SAM-binding methyltransferase superfamily. CmoB family. As to quaternary structure, homotetramer.

It catalyses the reaction carboxy-S-adenosyl-L-methionine + 5-hydroxyuridine(34) in tRNA = 5-carboxymethoxyuridine(34) in tRNA + S-adenosyl-L-homocysteine + H(+). In terms of biological role, catalyzes carboxymethyl transfer from carboxy-S-adenosyl-L-methionine (Cx-SAM) to 5-hydroxyuridine (ho5U) to form 5-carboxymethoxyuridine (cmo5U) at position 34 in tRNAs. The sequence is that of tRNA U34 carboxymethyltransferase from Yersinia pseudotuberculosis serotype O:3 (strain YPIII).